Consider the following 393-residue polypeptide: Prokineticin receptor 1 (393 aa).

Residues 1 to 62 are Extracellular-facing; that stretch reads METTMGFMDD…TNSRTFFAAK (62 aa). Residues Asn-11, Asn-14, and Asn-36 are each glycosylated (N-linked (GlcNAc...) asparagine). The helical transmembrane segment at 63-83 threads the bilayer; sequence IVIGMALVGIMLVCGIGNFIF. Residues 84–98 are Cytoplasmic-facing; it reads IAALVRYKKLRNLTN. Residues 99 to 119 traverse the membrane as a helical segment; sequence LLIANLAISDFLVAIVCCPFE. The Extracellular portion of the chain corresponds to 120–146; that stretch reads MDYYVVRQLSWEHGHVLCTSVNYLRTV. Cysteines 137 and 217 form a disulfide. The chain crosses the membrane as a helical span at residues 147 to 167; it reads SLYVSTNALLAIAIDRYLAIV. Over 168-180 the chain is Cytoplasmic; sequence HPLRPRMKCQTAT. A helical membrane pass occupies residues 181–201; that stretch reads GLIALVWTVSILIAIPSAYFT. The Extracellular portion of the chain corresponds to 202–232; sequence TETVLVIVKSQEKIFCGQIWPVDQQLYYKSY. The helical transmembrane segment at 233–253 threads the bilayer; sequence FLFIFGIEFVGPVVTMTLCYA. The Cytoplasmic portion of the chain corresponds to 254-282; sequence RISRELWFKAVPGFQTEQIRKRLRCRRKT. A helical transmembrane segment spans residues 283 to 303; sequence VLVLMCILTAYVLCWAPFYGF. Residues 304–322 lie on the Extracellular side of the membrane; it reads TIVRDFFPTVFVKEKHYLT. Residues 323-343 traverse the membrane as a helical segment; that stretch reads AFYIVECIAMSNSMINTLCFV. Residues 344 to 393 lie on the Cytoplasmic side of the membrane; it reads TVKNDTVKYFKKIMLLHWKASYNGGKSSADLDLKTIGMPATEEVDCIRLK.

It belongs to the G-protein coupled receptor 1 family. Localizes to glandular epithelium, stroma and vascular endothelial cells of first trimester decidua (at protein level). Up-regulated in first trimester decidua when compared with non-pregnant endometrium. Expressed in the stomach, throughout the small intestine, colon, rectum, thyroid gland, pituitary gland, salivary gland, adrenal gland, testis, ovary, brain, spleen, prostate and pancreas.

The protein resides in the cell membrane. Its function is as follows. Receptor for prokineticin 1. Exclusively coupled to the G(q) subclass of heteromeric G proteins. Activation leads to mobilization of calcium, stimulation of phosphoinositide turnover and activation of p44/p42 mitogen-activated protein kinase. May play a role during early pregnancy. The protein is Prokineticin receptor 1 (PROKR1) of Homo sapiens (Human).